A 51-amino-acid chain; its full sequence is Large ribosomal subunit protein eL39 (51 aa).

It belongs to the eukaryotic ribosomal protein eL39 family.

The protein is Large ribosomal subunit protein eL39 of Methanococcoides burtonii (strain DSM 6242 / NBRC 107633 / OCM 468 / ACE-M).